Here is a 640-residue protein sequence, read N- to C-terminus: Chaperone protein DnaK (640 aa).

A Phosphothreonine; by autocatalysis modification is found at Thr198. Residues 600–640 form a disordered region; it reads KTQGAGAEGGEQPHGEQEAGGAAKGEKVVDADFEEVKDDKK. Residues 630–640 show a composition bias toward acidic residues; the sequence is ADFEEVKDDKK.

The protein belongs to the heat shock protein 70 family.

Its function is as follows. Acts as a chaperone. This is Chaperone protein DnaK from Citrifermentans bemidjiense (strain ATCC BAA-1014 / DSM 16622 / JCM 12645 / Bem) (Geobacter bemidjiensis).